A 441-amino-acid polypeptide reads, in one-letter code: MPFDVQFLKVFDGVLMLFERAKAVFPGGVNSPARALKHLPTPLVAKAASGPYLYTDRGRLVDFCLAFGAIILGHAHPKVRRAVEEQLARGWIYALLTEEEVLFAEKIRAHVPSVEKMRFVNSGTEATMNAVRLARGFTGRDYIIKFDGNFHGSHDYVLVKAGSGAATWGIPTSAGIPSDVVKMTVVVPYNDVDAFVKAVREVGDRLAAVIVEPIAGNYGLILPEVEFLKALREETERVGALLIFDEVITGFRVGLGGAQGLYGVVPDLTTLGKVIGGGFPIGVFGGKSFIMDLVAPQGPVYNAGTFNAHPVSIAAGLAVLEELEGGQVYSVANDAARRMAEGIRDLAERVGFDVVVKHIASMFQFYFKKGDVKTPQDVRESNEKLYLKLHELAIGHGVYLAPSQFEVNFTSAAHTAEVVEEALGALEKVFRELRREVGGNS.

N6-(pyridoxal phosphate)lysine is present on K273.

The protein belongs to the class-III pyridoxal-phosphate-dependent aminotransferase family. HemL subfamily. It depends on pyridoxal 5'-phosphate as a cofactor.

Its subcellular location is the cytoplasm. The enzyme catalyses (S)-4-amino-5-oxopentanoate = 5-aminolevulinate. The protein operates within porphyrin-containing compound metabolism; protoporphyrin-IX biosynthesis; 5-aminolevulinate from L-glutamyl-tRNA(Glu): step 2/2. This Pyrobaculum calidifontis (strain DSM 21063 / JCM 11548 / VA1) protein is Glutamate-1-semialdehyde 2,1-aminomutase.